The primary structure comprises 102 residues: Small ribosomal subunit protein uS10 (102 aa).

The protein belongs to the universal ribosomal protein uS10 family. Part of the 30S ribosomal subunit.

Involved in the binding of tRNA to the ribosomes. The chain is Small ribosomal subunit protein uS10 from Dehalococcoides mccartyi (strain ATCC BAA-2266 / KCTC 15142 / 195) (Dehalococcoides ethenogenes (strain 195)).